The primary structure comprises 229 residues: Somatolactin (229 aa).

The N-terminal stretch at 1–24 (MHLVSVIQRGVWAVLLWPNLLASS) is a signal peptide. Intrachain disulfides connect cysteine 29/cysteine 39, cysteine 87/cysteine 203, and cysteine 220/cysteine 228. 2 N-linked (GlcNAc...) asparagine glycosylation sites follow: asparagine 143 and asparagine 175.

The protein belongs to the somatotropin/prolactin family.

It localises to the secreted. The chain is Somatolactin from Cyclopterus lumpus (Lumpsucker).